A 222-amino-acid polypeptide reads, in one-letter code: Ribosomal RNA small subunit methyltransferase I (222 aa).

The protein belongs to the methyltransferase superfamily. RsmI family.

The protein localises to the cytoplasm. It carries out the reaction cytidine(1402) in 16S rRNA + S-adenosyl-L-methionine = 2'-O-methylcytidine(1402) in 16S rRNA + S-adenosyl-L-homocysteine + H(+). Its function is as follows. Catalyzes the 2'-O-methylation of the ribose of cytidine 1402 (C1402) in 16S rRNA. The sequence is that of Ribosomal RNA small subunit methyltransferase I from Thermotoga maritima (strain ATCC 43589 / DSM 3109 / JCM 10099 / NBRC 100826 / MSB8).